The primary structure comprises 238 residues: Ubiquinone biosynthesis O-methyltransferase (238 aa).

S-adenosyl-L-methionine is bound by residues arginine 39, glycine 59, aspartate 80, and methionine 124.

The protein belongs to the methyltransferase superfamily. UbiG/COQ3 family.

The enzyme catalyses a 3-demethylubiquinol + S-adenosyl-L-methionine = a ubiquinol + S-adenosyl-L-homocysteine + H(+). It catalyses the reaction a 3-(all-trans-polyprenyl)benzene-1,2-diol + S-adenosyl-L-methionine = a 2-methoxy-6-(all-trans-polyprenyl)phenol + S-adenosyl-L-homocysteine + H(+). The protein operates within cofactor biosynthesis; ubiquinone biosynthesis. Functionally, O-methyltransferase that catalyzes the 2 O-methylation steps in the ubiquinone biosynthetic pathway. This chain is Ubiquinone biosynthesis O-methyltransferase, found in Aeromonas salmonicida (strain A449).